Here is a 468-residue protein sequence, read N- to C-terminus: Beta-monoglucosyldiacylglycerol synthase (468 aa).

A run of 4 helical transmembrane segments spans residues 51-71 (AALVLTIVWSGTIALHLVSWG), 72-92 (SIFILGLTTVLGIHALGVVFA), 361-381 (FMLTMYILPTAAIPDLLMAVV), and 387-407 (MLGPVTGLSVTMSVVGMFAGL).

It belongs to the glycosyltransferase 2 family. The cofactor is Mg(2+).

It is found in the membrane. It carries out the reaction a 1,2-diacyl-sn-glycerol + UDP-alpha-D-glucose = a 1,2-diacyl-3-O-(beta-D-glucopyranosyl)-sn-glycerol + UDP + H(+). Functionally, glucosyltransferase involved in the biosynthesis of the non-bilayer-forming membrane lipid beta-monoglucosyldiacylglycerol which contributes to regulate the properties and stability of the membrane. Catalyzes the transfer of a glucosyl residue from UDP-Glc to diacylglycerol (DAG) acceptor to form the corresponding beta-glucosyl-DAG (1,2-diacyl-3-O-(beta-D-glucopyranosyl)-sn-glycerol). It can only use UDP-Glc as sugar donor. The chain is Beta-monoglucosyldiacylglycerol synthase from Trichormus variabilis (strain ATCC 29413 / PCC 7937) (Anabaena variabilis).